Consider the following 248-residue polypeptide: UPF0280 protein Maeo_0343 (248 aa).

The protein belongs to the UPF0280 family.

This chain is UPF0280 protein Maeo_0343, found in Methanococcus aeolicus (strain ATCC BAA-1280 / DSM 17508 / OCM 812 / Nankai-3).